The following is a 240-amino-acid chain: Regulatory protein SdiA (240 aa).

In terms of domain architecture, HTH luxR-type spans 173–238; that stretch reads VMTPEMNFSK…QVACYAAATG (66 aa). A DNA-binding region (H-T-H motif) is located at residues 197-216; sequence SAEIAMILSISENTVNFHQK.

Functionally, activates cell division by specifically increasing transcription from one of the two promoters that lie immediately upstream of the ftsQAZ gene cluster. Activates ydiV expression in response to extracellular autoinducer AI-1 (Vibrio fischeri autoinducer oxoC6). The chain is Regulatory protein SdiA (sdiA) from Escherichia coli (strain K12).